The chain runs to 1668 residues: MMNTLDHRPLGRMETMEGKPDEDEVPTSSNSDAKGKGYYYSSGTVPTDDSTLEEKCQQKTFDPSCPTPKTPVIVPNREFDPNFSTVTENKGWDIFRLLPPKPDRLGHGFWHDASLQVLKLATFLVLFLLTLGSAVVAKSTFILMTSAIGWGGQTITICNQVISEATQNTVKLKNAHVVKWVWATLLALSAPEALCFVRSMHRTMFRNVKRPTFIQFVFVLIIETFHSIGVGILVFRIFPDLDAVTAAQLTNAMCFVPAILSVISRKPNKSALLLVIIDFAAIAAQSSGFWALPMFLPNLQKHLVAIPVSLTLISLAWWQNFVHRDSVFPPVRTLAKFAQRLSERRSKTYAFVSLWKICIYVVCCFLFISSRMKIEDMLQKDPFGEKLLSVAGHDMNQTQIEKFQLRINQMIEQANREAGFYAAAEKKKQPPKKQPKADEAEQVDAGEYMMKRFKRFIGDAGENEEEEPEEEEFSSYNIYSNYVERNQLTMAYDALWLVIFQFGAVFVCYHSSKFACKVMMQRMGFALPMALSVPVTVLLLSTNCRMRQKDSCYGTNVLTVELFWQCNGASMSLADFILTPQTWIWLCWLASQFWITIHLWNPKHERLAKSEKLFILPYYIGAFVDQSLAFNRRRDDKAKIKAEDLEFDAEDSSLTYETIPGLQNKTPPSVCSASSSKLENGLIRDSASSADAITKIYACATMWHETGVEMTCMLKSLFRMDEDQCARRNAQKYLKVIDPDYYEFEAHIFFDDAYDVNEYGEPEINKFVKQIVNVIDQAASAVHQTQMRLKPPKKAKTPYGGKLTYIMPGKNKLFIHLKDNQKIRHRKRWSQVMYLYYLLGYRLMMKVDDPSRKEIISENTFILTLDGDVDFTPSSVYLLVDLMKKNRRLGAACGRIHPRGDGAMVWYQKFEYAIGHWLQKATEHMIGCVMCSPGCFSLFRAYALMDDNVARRYALKSEEPKHFIQYDQGEDRWLCTLLLQRGYRVEYCAASDAQTFAPEGFNEFFNQRRRWIPSTIFNIMDLLKDYRNVVRVNESISIWYIIYQLVMLISSILGPGTIFVMIIGAISISFSIDTLISLVIVSIPVVVFIVVCLTAKPEHQLICAQTIGAIFAMLMTAVVVGTSLQLQKDGLLSPHSMFTVAVATSFLTAAILHPLEFTCIIPGTIYFLAIPCMYMLLPIYSVCNMHTVSWGTREDPRPTEKNTLAKKTPGNLESGDGAGNSENWCTRFLCCGRGTVHPMTMVINEKLNEVIKKVDRLDRKHHPSLARRASILSSTGGTIQIDKCSEADEDEQAEIEDALEMSNQSHAAKKNQKWKQAQSEAWLADKALKRAEREYLEPEEESFWNDVIERYLSPLIMDGKDMDRLRAGLIAIRNSHTVYFLMINIVFIISVLVLQIHKDCLNIEWPLGPKFNHTVRPCYANHDDNQKEEVWVMTRLQLEPIGLVFLIFFVSILVIQFLAMLCHRFGTLAHIIASTELFCFRKTMDRLSEDELVAQNAVEIARELQAIRGIDENAHNIDNPTEDRGISRRRVVQNLESSRKSMMKRKTETLDAAFKKRFFALSSEQTPDPAGFSARDNSKRLTLRKGTIRALEHRRDSLFGTLDNRKDDEVDATSMRGPAQRRLERLFTAQQDQNSPTSDGNRRKSNSRPWDQPTSSATSSGDVELRRF.

Over residues 1–19 the composition is skewed to basic and acidic residues; sequence MMNTLDHRPLGRMETMEGK. Residues 1 to 51 are disordered; it reads MMNTLDHRPLGRMETMEGKPDEDEVPTSSNSDAKGKGYYYSSGTVPTDDST. The Cytoplasmic segment spans residues 1–116; the sequence is MMNTLDHRPL…HGFWHDASLQ (116 aa). The chain crosses the membrane as a helical span at residues 117 to 137; that stretch reads VLKLATFLVLFLLTLGSAVVA. Residues 138–176 lie on the Extracellular side of the membrane; it reads KSTFILMTSAIGWGGQTITICNQVISEATQNTVKLKNAH. Residues 177 to 197 form a helical membrane-spanning segment; that stretch reads VVKWVWATLLALSAPEALCFV. Over 198 to 212 the chain is Cytoplasmic; sequence RSMHRTMFRNVKRPT. The helical transmembrane segment at 213–233 threads the bilayer; that stretch reads FIQFVFVLIIETFHSIGVGIL. Residues 234–242 are Extracellular-facing; that stretch reads VFRIFPDLD. Residues 243–263 traverse the membrane as a helical segment; sequence AVTAAQLTNAMCFVPAILSVI. Over 264–271 the chain is Cytoplasmic; the sequence is SRKPNKSA. Residues 272–292 traverse the membrane as a helical segment; the sequence is LLLVIIDFAAIAAQSSGFWAL. At 293-301 the chain is on the extracellular side; the sequence is PMFLPNLQK. A helical transmembrane segment spans residues 302–322; sequence HLVAIPVSLTLISLAWWQNFV. Topologically, residues 323–347 are cytoplasmic; that stretch reads HRDSVFPPVRTLAKFAQRLSERRSK. The chain crosses the membrane as a helical span at residues 348–368; the sequence is TYAFVSLWKICIYVVCCFLFI. Over 369–487 the chain is Extracellular; sequence SSRMKIEDML…IYSNYVERNQ (119 aa). Asn-396 is a glycosylation site (N-linked (GlcNAc...) asparagine). The chain crosses the membrane as a helical span at residues 488–508; sequence LTMAYDALWLVIFQFGAVFVC. Over 509–522 the chain is Cytoplasmic; sequence YHSSKFACKVMMQR. A helical transmembrane segment spans residues 523-543; it reads MGFALPMALSVPVTVLLLSTN. Residues 544–576 are Extracellular-facing; the sequence is CRMRQKDSCYGTNVLTVELFWQCNGASMSLADF. Residues 577–597 form a helical membrane-spanning segment; it reads ILTPQTWIWLCWLASQFWITI. Residues 598-1045 are Cytoplasmic-facing; sequence HLWNPKHERL…ISIWYIIYQL (448 aa). The chain crosses the membrane as a helical span at residues 1046–1066; it reads VMLISSILGPGTIFVMIIGAI. Residues 1067-1074 are Extracellular-facing; it reads SISFSIDT. A helical transmembrane segment spans residues 1075–1095; the sequence is LISLVIVSIPVVVFIVVCLTA. At 1096–1100 the chain is on the cytoplasmic side; the sequence is KPEHQ. A helical transmembrane segment spans residues 1101 to 1121; the sequence is LICAQTIGAIFAMLMTAVVVG. The Extracellular segment spans residues 1122–1136; sequence TSLQLQKDGLLSPHS. Residues 1137-1157 form a helical membrane-spanning segment; it reads MFTVAVATSFLTAAILHPLEF. Thr-1158 is a topological domain (cytoplasmic). A helical membrane pass occupies residues 1159-1179; that stretch reads CIIPGTIYFLAIPCMYMLLPI. Topologically, residues 1180 to 1375 are extracellular; that stretch reads YSVCNMHTVS…RAGLIAIRNS (196 aa). A disordered region spans residues 1192–1216; it reads TREDPRPTEKNTLAKKTPGNLESGD. The stretch at 1280–1335 forms a coiled coil; sequence QIDKCSEADEDEQAEIEDALEMSNQSHAAKKNQKWKQAQSEAWLADKALKRAEREY. An N-linked (GlcNAc...) asparagine glycan is attached at Asn-1303. A helical transmembrane segment spans residues 1376 to 1396; that stretch reads HTVYFLMINIVFIISVLVLQI. Over 1397 to 1440 the chain is Cytoplasmic; sequence HKDCLNIEWPLGPKFNHTVRPCYANHDDNQKEEVWVMTRLQLEP. The helical transmembrane segment at 1441–1461 threads the bilayer; that stretch reads IGLVFLIFFVSILVIQFLAML. At 1462 to 1668 the chain is on the extracellular side; it reads CHRFGTLAHI…SSGDVELRRF (207 aa). The interval 1625-1668 is disordered; it reads RLFTAQQDQNSPTSDGNRRKSNSRPWDQPTSSATSSGDVELRRF. Composition is skewed to polar residues over residues 1628-1639 and 1647-1661; these read TAQQDQNSPTSD and SRPWDQPTSSATSSG.

This sequence belongs to the chitin synthase family. Class IV subfamily.

It localises to the cell membrane. The catalysed reaction is [(1-&gt;4)-N-acetyl-beta-D-glucosaminyl](n) + UDP-N-acetyl-alpha-D-glucosamine = [(1-&gt;4)-N-acetyl-beta-D-glucosaminyl](n+1) + UDP + H(+). Functionally, may be involved in chitin synthesis in the pharynx during larval development. This Caenorhabditis elegans protein is Chitin synthase chs-2.